The primary structure comprises 131 residues: Small ribosomal subunit protein uS8 (131 aa).

The protein belongs to the universal ribosomal protein uS8 family. In terms of assembly, part of the 30S ribosomal subunit. Contacts proteins S5 and S12.

One of the primary rRNA binding proteins, it binds directly to 16S rRNA central domain where it helps coordinate assembly of the platform of the 30S subunit. The protein is Small ribosomal subunit protein uS8 of Helicobacter acinonychis (strain Sheeba).